Reading from the N-terminus, the 361-residue chain is Chorismate synthase (361 aa).

R48 is a binding site for NADP(+). Residues 125 to 127 (RSS), 238 to 239 (NA), G278, 293 to 297 (KPTSS), and R319 contribute to the FMN site.

It belongs to the chorismate synthase family. In terms of assembly, homotetramer. The cofactor is FMNH2.

The enzyme catalyses 5-O-(1-carboxyvinyl)-3-phosphoshikimate = chorismate + phosphate. Its pathway is metabolic intermediate biosynthesis; chorismate biosynthesis; chorismate from D-erythrose 4-phosphate and phosphoenolpyruvate: step 7/7. In terms of biological role, catalyzes the anti-1,4-elimination of the C-3 phosphate and the C-6 proR hydrogen from 5-enolpyruvylshikimate-3-phosphate (EPSP) to yield chorismate, which is the branch point compound that serves as the starting substrate for the three terminal pathways of aromatic amino acid biosynthesis. This reaction introduces a second double bond into the aromatic ring system. This is Chorismate synthase from Aliivibrio fischeri (strain ATCC 700601 / ES114) (Vibrio fischeri).